Here is a 246-residue protein sequence, read N- to C-terminus: Triosephosphate isomerase (246 aa).

Residue 9 to 11 (NWK) coordinates substrate. The Electrophile role is filled by His-99. The active-site Proton acceptor is Glu-168. Substrate is bound by residues Gly-174, Ser-207, and 228-229 (GG).

This sequence belongs to the triosephosphate isomerase family. Homodimer.

The protein resides in the cytoplasm. It catalyses the reaction D-glyceraldehyde 3-phosphate = dihydroxyacetone phosphate. It participates in carbohydrate biosynthesis; gluconeogenesis. The protein operates within carbohydrate degradation; glycolysis; D-glyceraldehyde 3-phosphate from glycerone phosphate: step 1/1. Involved in the gluconeogenesis. Catalyzes stereospecifically the conversion of dihydroxyacetone phosphate (DHAP) to D-glyceraldehyde-3-phosphate (G3P). This chain is Triosephosphate isomerase, found in Prochlorococcus marinus (strain NATL1A).